Consider the following 177-residue polypeptide: MLDAFSKVITSADGKAAYVGGADLQALKKFVSDGNKRMDAVNAIVSNASCIVSDAVSGMVCENPALIAPNGGVYSNRKMAACLRDAEIILRYVSYSLLSGDSSVLEDRCLNGLKETYASLGVPAAGNARAVAIMKATVNGFINNTAQQKKLSTPAGDCSALASEAGGYFDKVSSALA.

4 residues coordinate (2R,3E)-phycocyanobilin: tyrosine 18, lysine 28, asparagine 35, and aspartate 39. Positions 50, 54, and 61 each coordinate 15,16-dihydrobiliverdin. Arginine 77, cysteine 82, arginine 84, and aspartate 85 together coordinate (2R,3E)-phycocyanobilin. 15,16-dihydrobiliverdin is bound by residues arginine 129, glutamine 148, and lysine 149. Residues proline 154, glycine 156, and cysteine 158 each contribute to the (2R,3E)-phycocyanobilin site.

Belongs to the phycobiliprotein family. In terms of assembly, heterotetramer of 2 identical alpha chains and 2 identical beta chains which form 2 alpha-beta heterodimers within the heterotetramer. The two alpha-beta heterodimers are rotated to an open configuration in contrast to the closed configuration found in other cryptophyte species due to the insertion of a single amino acid, 'Asp-65', in a conserved region of the alpha chain. In the open form, the central chromophores are not in physical contact but are separated by a water-filled channel. In terms of processing, contains three phycocyanobilin chromophores and one 15,16-dihydrobiliverdin chromophore with binding of the phycocyanobilin chromophores mediated by both the alpha and beta subunits.

The protein localises to the plastid. Its subcellular location is the chloroplast thylakoid membrane. Light-harvesting photosynthetic bile pigment-protein from the phycobiliprotein complex. The sequence is that of Phycoerythrin beta subunit from Hemiselmis virescens.